A 320-amino-acid chain; its full sequence is Cyclin-D6-1 (320 aa).

A disordered region spans residues His-279 to Glu-320.

It belongs to the cyclin family. Cyclin D subfamily.

This is Cyclin-D6-1 (CYCD6-1) from Oryza sativa subsp. japonica (Rice).